The sequence spans 27 residues: Equinin A (27 aa).

Over residues 1-13 (AVDKGGGKAEKKD) the composition is skewed to basic and acidic residues. The tract at residues 1-27 (AVDKGGGKAEKKDGNRKKKLAGGEGGG) is disordered.

The protein localises to the secreted. Its function is as follows. Peptide with unknown function. Does not show antimicrobial and hemolytic activities. The polypeptide is Equinin A (Actinia equina (Beadlet anemone)).